The sequence spans 65 residues: Large ribosomal subunit protein bL31 (65 aa).

Cys16, Cys18, Cys36, and Cys39 together coordinate Zn(2+).

It belongs to the bacterial ribosomal protein bL31 family. Type A subfamily. In terms of assembly, part of the 50S ribosomal subunit. Zn(2+) serves as cofactor.

Functionally, binds the 23S rRNA. The protein is Large ribosomal subunit protein bL31 of Carboxydothermus hydrogenoformans (strain ATCC BAA-161 / DSM 6008 / Z-2901).